A 106-amino-acid chain; its full sequence is MNKVKFKKGDLVKVIAGKHKGTEGPIIRVLREKSRVVIEGITNIKHVKPSQDNTEGGIQQVPASVHISNVALIDPKNKKEITKISYQIADNGKKVRIARKSKAHLA.

It belongs to the universal ribosomal protein uL24 family. In terms of assembly, part of the 50S ribosomal subunit.

One of two assembly initiator proteins, it binds directly to the 5'-end of the 23S rRNA, where it nucleates assembly of the 50S subunit. Functionally, one of the proteins that surrounds the polypeptide exit tunnel on the outside of the subunit. The protein is Large ribosomal subunit protein uL24 of Spiroplasma kunkelii.